Reading from the N-terminus, the 221-residue chain is Protein OPG164 (221 aa).

Residue Met-1 is a topological domain, extracellular. The chain crosses the membrane as a helical span at residues 2-22 (MLVPLITVTVVAGTILVCYIL). At 23 to 221 (YICRKKIRTV…DIESSVVSLV (199 aa)) the chain is on the cytoplasmic side. Phosphotyrosine; by host is present on residues Tyr-112 and Tyr-132. Short sequence motifs (NPF-motif) lie at residues 161–163 (NPF), 176–178 (NPF), and 190–192 (NPF).

Belongs to the orthopoxvirus OPG164 protein family. In terms of assembly, interacts with host NCK. Interacts with protein OPG161 (via C-terminus). Interacts with protein OPG056. Interacts (via C-terminus) with host kinesin light chain/KLC1. Interacts with host intersectin-1/ITSN1 and EPS15. In terms of processing, phosphorylated on Tyr-112 and Tyr-132. Phosphorylations activate the host ARP2-ARP3 complex and lead to actin nucleation.

Its subcellular location is the host cell membrane. Involved in the intracellular transport and egress of virions to the host cell surface with help of protein OPG056. Also participates in the formation of actin tails at the plasma membrane to allow efficient actin-based motility and thus cell to cell transmission of viral particles. Recruits host intersectin-1/ITSN1 and activates host CDC42 to drive ARP2/3-mediated actin polymerization. The polypeptide is Protein OPG164 (OPG164) (Homo sapiens (Human)).